We begin with the raw amino-acid sequence, 342 residues long: Holliday junction branch migration complex subunit RuvB (342 aa).

A large ATPase domain (RuvB-L) region spans residues 1–179 (MTNILSPEKI…FGIPMRLNFY (179 aa)). Residues Ile18, Arg19, Gly60, Lys63, Thr64, Thr65, 126–128 (EDF), Arg169, Tyr179, and Arg216 contribute to the ATP site. A Mg(2+)-binding site is contributed by Thr64. Positions 180-250 (NTEELKKVLN…ISDFGLNRLE (71 aa)) are small ATPAse domain (RuvB-S). Positions 253-342 (HIGLDSNDYR…HQFNIFNENE (90 aa)) are head domain (RuvB-H). DNA is bound by residues Arg289, Arg308, and Arg313.

Belongs to the RuvB family. As to quaternary structure, homohexamer. Forms an RuvA(8)-RuvB(12)-Holliday junction (HJ) complex. HJ DNA is sandwiched between 2 RuvA tetramers; dsDNA enters through RuvA and exits via RuvB. An RuvB hexamer assembles on each DNA strand where it exits the tetramer. Each RuvB hexamer is contacted by two RuvA subunits (via domain III) on 2 adjacent RuvB subunits; this complex drives branch migration. In the full resolvosome a probable DNA-RuvA(4)-RuvB(12)-RuvC(2) complex forms which resolves the HJ.

The protein resides in the cytoplasm. The catalysed reaction is ATP + H2O = ADP + phosphate + H(+). Functionally, the RuvA-RuvB-RuvC complex processes Holliday junction (HJ) DNA during genetic recombination and DNA repair, while the RuvA-RuvB complex plays an important role in the rescue of blocked DNA replication forks via replication fork reversal (RFR). RuvA specifically binds to HJ cruciform DNA, conferring on it an open structure. The RuvB hexamer acts as an ATP-dependent pump, pulling dsDNA into and through the RuvAB complex. RuvB forms 2 homohexamers on either side of HJ DNA bound by 1 or 2 RuvA tetramers; 4 subunits per hexamer contact DNA at a time. Coordinated motions by a converter formed by DNA-disengaged RuvB subunits stimulates ATP hydrolysis and nucleotide exchange. Immobilization of the converter enables RuvB to convert the ATP-contained energy into a lever motion, pulling 2 nucleotides of DNA out of the RuvA tetramer per ATP hydrolyzed, thus driving DNA branch migration. The RuvB motors rotate together with the DNA substrate, which together with the progressing nucleotide cycle form the mechanistic basis for DNA recombination by continuous HJ branch migration. Branch migration allows RuvC to scan DNA until it finds its consensus sequence, where it cleaves and resolves cruciform DNA. The sequence is that of Holliday junction branch migration complex subunit RuvB from Rickettsia felis (strain ATCC VR-1525 / URRWXCal2) (Rickettsia azadi).